Reading from the N-terminus, the 449-residue chain is MADQTKKRYVTSEDLKKHNKPGDLWISIQGKVYDVSDWVKSHPGGEAAILNLAGQDVTDAFIAYHPGTAWHHLEKLHNGYHVRDHHVSDVSRDYRRLAAEFSKRGLFDKKGHVTLYTLTCVGVMLAAVLYGVLACTSIWAHLISAVLLGLLWIQSAYVGHDSGHYTVTSTKPCNKLIQLLSGNCLTGISIAWWKWTHNAHHIACNSLDHDPDLQHIPIFAVSTKFFNSMTSRFYGRKLTFDPLARFLISYQHWTFYPVMCVGRINLFIQTFLLLFSKRHVPDRALNIAGILVFWTWFPLLVSFLPNWQERFIFVFVSFAVTAIQHVQFCLNHFAADVYTGPPNGNDWFEKQTAGTLDISCRSFMDWFFGGLQFQLEHHLFPRLPRCHLRTVSPVVKELCKKHNLPYRSLSWWEANVWTIRTLKNAAIQARDATNPVLKNLLWEAVNTHG.

A Cytochrome b5 heme-binding domain is found at Lys-7–Ser-91. The heme site is built by His-42 and His-65. Helical transmembrane passes span Val-113–Leu-133 and Ile-138–Val-158. The Histidine box-1 motif lies at His-160–His-164. A helical membrane pass occupies residues Leu-176–Thr-196. The Histidine box-2 motif lies at His-197–His-201. The next 3 membrane-spanning stretches (helical) occupy residues Phe-255–Phe-275, Ala-284–Leu-304, and Phe-311–Asn-331. The short motif at Gln-374–His-378 is the Histidine box-3 element.

It belongs to the fatty acid desaturase type 1 family. It depends on Fe cation as a cofactor. As to expression, highly expressed in flowers and siliques. Expressed at low levels in roots, leaves and stems.

It localises to the endoplasmic reticulum membrane. It carries out the reaction an N-acyl-(4R)-4-hydroxysphinganine + 2 Fe(II)-[cytochrome b5] + O2 + 2 H(+) = a (4R,8E)-4-hydroxysphingenine ceramide + 2 Fe(III)-[cytochrome b5] + 2 H2O. The catalysed reaction is an N-acyl-(4R)-4-hydroxysphinganine + 2 Fe(II)-[cytochrome b5] + O2 + 2 H(+) = a (4R,8Z)-4-hydroxysphing-8-enine ceramide + 2 Fe(III)-[cytochrome b5] + 2 H2O. In terms of biological role, plays a major role as delta(8)-fatty-acid desaturase which introduces a double bond at the 8-position in the long-chain base (LCB) of ceramides with or without a hydroxy group at the 4-position. The enzyme produces both the 8E and 8Z isomers (in a 4:1 ratio). This structural modification contributes to the quantitative partitioning of ceramides between the two major sphingolipid classes, glucosylceramides and glycosylinositolphosphoryl ceramides. Sphingolipids are important membrane components involved in environmental stress responses, such as resistance to chilling, and act as cell signaling molecules. The sequence is that of Delta(8)-fatty-acid desaturase 2 (SLD2) from Arabidopsis thaliana (Mouse-ear cress).